A 35-amino-acid chain; its full sequence is uncharacterized protein (35 aa).

This is an uncharacterized protein from Escherichia coli (Bacteriophage T3).